A 523-amino-acid polypeptide reads, in one-letter code: Polypyrimidine tract-binding protein 3 (523 aa).

Positions 1–25 (MNNSTSAGVYANGNDNKKFKGDRPP) are disordered. RRM domains are found at residues 30-114 (RVLH…NLPN), 153-229 (LRII…FSKL), and 329-403 (SVLL…LSKH). Residue Lys-36 forms a Glycyl lysine isopeptide (Lys-Gly) (interchain with G-Cter in SUMO2) linkage. Tyr-98 is modified (phosphotyrosine). Thr-109 carries the post-translational modification Phosphothreonine. Lys-187 participates in a covalent cross-link: Glycyl lysine isopeptide (Lys-Gly) (interchain with G-Cter in SUMO2). N6-acetyllysine is present on Lys-394. Residues 406 to 426 (VQLPREGQEDQGLTKDFSNSP) form a disordered region. Ser-425 carries the post-translational modification Phosphoserine. The RRM 4 domain maps to 446-521 (ATLHLSNIPP…HHLRVSFSKS (76 aa)).

Interacts with THBS4 (via the acidic amphipathic C-terminus). Detected specifically in spleen, thymus, lungs, and bone marrow.

Functionally, RNA-binding protein that mediates pre-mRNA alternative splicing regulation. Plays a role in the regulation of cell proliferation, differentiation and migration. Positive regulator of EPO-dependent erythropoiesis. Participates in cell differentiation regulation by repressing tissue-specific exons. Promotes Fas exon 6 skipping. Binds RNA, preferentially to both poly(G) and poly(U). In Rattus norvegicus (Rat), this protein is Polypyrimidine tract-binding protein 3 (Ptbp3).